A 504-amino-acid polypeptide reads, in one-letter code: Zinc finger CCCH domain-containing protein 18 (504 aa).

A coiled-coil region spans residues 40-69 (SNADLLEVHEELLAAIKDAEEGLLHLKRSR). The disordered stretch occupies residues 77–105 (IFPNQEPTSEAPEVAVDPPDDVEPEPLEP). Residues 94–104 (PPDDVEPEPLE) show a composition bias toward acidic residues. A C3H1-type zinc finger spans residues 146–173 (SENMSMCKFFLQQRCRFGSNCRLSHGIV). The tract at residues 230–276 (GSSARLPSDSLSISEYADESDEDGEGSSSDEGSDFSEDGDQEDESVH) is disordered. Acidic residues-rich tracts occupy residues 245 to 254 (YADESDEDGE) and 260 to 272 (EGSDFSEDGDQED). In terms of domain architecture, G-patch spans 304-350 (TRGVASKMMAKMGYREGMGLGVSGQGMLDPIPVKVLPPKQSLDHAVA). Disordered regions lie at residues 351-390 (ASEVNDSVGPGKKRSRGGKRKREKKFAEQARAAKAEEEER), 406-432 (AEGSAVKSKKDSSGEANGHAKKEDRRS), and 482-504 (EATHASATNAVARKEKEKKWLKF). The segment covering 361–374 (GKKRSRGGKRKREK) has biased composition (basic residues). 3 stretches are compositionally biased toward basic and acidic residues: residues 375 to 390 (KFAEQARAAKAEEEER), 413 to 432 (SKKDSSGEANGHAKKEDRRS), and 493 to 504 (ARKEKEKKWLKF). A coiled-coil region spans residues 430 to 500 (RRSLLAYDDE…AVARKEKEKK (71 aa)).

The protein is Zinc finger CCCH domain-containing protein 18 of Oryza sativa subsp. japonica (Rice).